The sequence spans 555 residues: Cytochrome P450 monooxygeanse terQ (555 aa).

The chain crosses the membrane as a helical span at residues 10-30; that stretch reads VPAHAWPTITVAGAVMVVVLL. Cys-479 contributes to the heme binding site. The disordered stretch occupies residues 535 to 555; that stretch reads DAGNTARVDPGAPDGVASEPS.

Belongs to the cytochrome P450 family. Requires heme as cofactor.

It is found in the membrane. It participates in secondary metabolite biosynthesis. Its function is as follows. Cytochrome P450 monooxygeanse; part of the gene cluster that mediates the biosynthesis of terpendoles, indole-diterpene (IDT) mycotoxins including terpendole I, terpendole K, terpendole C, as well as the kinesin Eg5 inhibitor terpendole E. TerQ is a C11-hydroxylating enzyme that converts paspalline into terpendole E. Is also able to hydroxylate 13-desoxyterpendole I at C-13 to produce terpendole I. Terpendoles biosynthesis begins with the synthesis of geranylgeranyl diphosphate (GGPP) by a yet unidentified GGPP synthase. Condensation of indole-3-glycerol phosphate with GGPP by the prenyltransferase terC then forms 3-geranylgeranylindole (3-GGI), followed by epoxidation and cyclization of this intermediate (by the FAD-dependent monooxygeanse terM and the terpene cyclase terB) to form paspaline. The cytochrome monooxygenase terQ then hydroxylates paspalline at C-11 to yield terpendole E. The cytochrome monooxygenase terP converts terpendole E to 13-desoxyterpendole I, and terQ converts 13-desoxyterpendole I into terpendole I. TerF and terK are required for conversion of terpendole I to terpendole C which is further converted to terpendole K. The chain is Cytochrome P450 monooxygeanse terQ from Tolypocladium album (Soil fungus).